A 738-amino-acid polypeptide reads, in one-letter code: MDDVQFSEGVIDNGRFGTRTIRFETGRLARQAQGSVVAYLDGETMLLSSTSVGKQPKEDCDFFPLTVDVEERSYAAGKIPGSYFRREGRPSTEAILACRLIDRPLRPSFNAGLRNEVQVIVTVLSIAPGEFYEALAINAASASTLVSGLPFSGPIGGVRLALIDGQWVAFPRYEDLSGAVFDLTVAGRVFVNESGKEDIAIMMVEAEATESAWDLIHSHGAKKPNEEVIEEGIESAKVFIRTLCDIQRDLASKLSLSHTEPDLYPDYSDSVHSFVEGLVKSDLEKVYRGNHDSGYAPNALSASDEIKQKAYDAFHDAVLSGRFDQDSLSQFPHAYKAVLKDVVRTCVLEGFARMDGRGLSDIRPLDAEVQVVPRVHGSAVFQRGETQVLGVTTLNMLKMEQQIDSLAPIVSKRYIHHYNFPPYSTGEVGRVGSPKRREIGHGFLAERALVPVLPSREDFPYAIRQVSEALGSNGSTSMGSVCASTLSLLNAGVPLRAPVAGIAMGLISGRVDGEMRYVTLTDISGSEDALGDMDFKVAGTSDFITALQLDTKLDGIPAHVLSEALAHARSARLAILDVLTRVIDSPDQMSEYAPRVVRVKIPVQKIGELIGPKGKVINSIQDETGAEISIEDDGTVYIGSSQADSSEKAVAMVNSIVNPVEPCVGSQFLGTVVKNMPFGSFISLVPGKDGLLHISEIRKMVDGRHLESVDEVLSVGQKVLVEVSKIDDRGKLCLVAVK.

Residues aspartate 528 and aspartate 534 each contribute to the Mg(2+) site. A KH domain is found at 594–653 (PRVVRVKIPVQKIGELIGPKGKVINSIQDETGAEISIEDDGTVYIGSSQADSSEKAVAMV). The 73-residue stretch at 665–737 (GSQFLGTVVK…DRGKLCLVAV (73 aa)) folds into the S1 motif domain.

Belongs to the polyribonucleotide nucleotidyltransferase family. It depends on Mg(2+) as a cofactor.

The protein localises to the cytoplasm. The enzyme catalyses RNA(n+1) + phosphate = RNA(n) + a ribonucleoside 5'-diphosphate. Its function is as follows. Involved in mRNA degradation. Catalyzes the phosphorolysis of single-stranded polyribonucleotides processively in the 3'- to 5'-direction. The protein is Polyribonucleotide nucleotidyltransferase of Tropheryma whipplei (strain Twist) (Whipple's bacillus).